Reading from the N-terminus, the 266-residue chain is Glucosamine-6-phosphate deaminase (266 aa).

D72 functions as the Proton acceptor; for enolization step in the catalytic mechanism. D141 acts as the For ring-opening step in catalysis. The active-site Proton acceptor; for ring-opening step is the H143. E148 serves as the catalytic For ring-opening step.

This sequence belongs to the glucosamine/galactosamine-6-phosphate isomerase family. NagB subfamily. Homohexamer; trimer of disulfide-linked dimers.

The enzyme catalyses alpha-D-glucosamine 6-phosphate + H2O = beta-D-fructose 6-phosphate + NH4(+). It functions in the pathway amino-sugar metabolism; N-acetylneuraminate degradation; D-fructose 6-phosphate from N-acetylneuraminate: step 5/5. Allosterically activated by N-acetylglucosamine 6-phosphate (GlcNAc6P). Its function is as follows. Catalyzes the reversible isomerization-deamination of glucosamine 6-phosphate (GlcN6P) to form fructose 6-phosphate (Fru6P) and ammonium ion. The chain is Glucosamine-6-phosphate deaminase from Shigella dysenteriae serotype 1 (strain Sd197).